Here is a 285-residue protein sequence, read N- to C-terminus: Probable endonuclease 4 (285 aa).

Histidine 69, histidine 109, glutamate 145, aspartate 179, histidine 182, histidine 216, aspartate 229, histidine 231, and glutamate 261 together coordinate Zn(2+).

It belongs to the AP endonuclease 2 family. Zn(2+) is required as a cofactor.

The enzyme catalyses Endonucleolytic cleavage to 5'-phosphooligonucleotide end-products.. In terms of biological role, endonuclease IV plays a role in DNA repair. It cleaves phosphodiester bonds at apurinic or apyrimidinic (AP) sites, generating a 3'-hydroxyl group and a 5'-terminal sugar phosphate. This is Probable endonuclease 4 from Shigella sonnei (strain Ss046).